A 114-amino-acid polypeptide reads, in one-letter code: Large ribosomal subunit protein uL22 (114 aa).

The protein belongs to the universal ribosomal protein uL22 family. As to quaternary structure, part of the 50S ribosomal subunit.

In terms of biological role, this protein binds specifically to 23S rRNA; its binding is stimulated by other ribosomal proteins, e.g. L4, L17, and L20. It is important during the early stages of 50S assembly. It makes multiple contacts with different domains of the 23S rRNA in the assembled 50S subunit and ribosome. Its function is as follows. The globular domain of the protein is located near the polypeptide exit tunnel on the outside of the subunit, while an extended beta-hairpin is found that lines the wall of the exit tunnel in the center of the 70S ribosome. The chain is Large ribosomal subunit protein uL22 from Desulfitobacterium hafniense (strain DSM 10664 / DCB-2).